We begin with the raw amino-acid sequence, 139 residues long: Small ribosomal subunit protein uS11A (139 aa).

The segment at 119-139 is disordered; sequence DVTPIPTDSTRRKGGRRGRRL. Positions 130 to 139 are enriched in basic residues; sequence RKGGRRGRRL.

Belongs to the universal ribosomal protein uS11 family. Component of the small ribosomal subunit (SSU). Mature yeast ribosomes consist of a small (40S) and a large (60S) subunit. The 40S small subunit contains 1 molecule of ribosomal RNA (18S rRNA) and at least 33 different proteins. The large 60S subunit contains 3 rRNA molecules (25S, 5.8S and 5S rRNA) and at least 46 different proteins. uS11 interacts with eS1 forming part of the mRNA exit tunnel. uS11 interacts with snoRNA U3. uS11 interacts with MPP10. Component of the ribosomal small subunit (SSU) processome composed of at least 40 protein subunits and snoRNA U3.

Its subcellular location is the cytoplasm. It localises to the nucleus. The protein localises to the nucleolus. Component of the ribosome, a large ribonucleoprotein complex responsible for the synthesis of proteins in the cell. The small ribosomal subunit (SSU) binds messenger RNAs (mRNAs) and translates the encoded message by selecting cognate aminoacyl-transfer RNA (tRNA) molecules. The large subunit (LSU) contains the ribosomal catalytic site termed the peptidyl transferase center (PTC), which catalyzes the formation of peptide bonds, thereby polymerizing the amino acids delivered by tRNAs into a polypeptide chain. The nascent polypeptides leave the ribosome through a tunnel in the LSU and interact with protein factors that function in enzymatic processing, targeting, and the membrane insertion of nascent chains at the exit of the ribosomal tunnel. uS11 is involved in nucleolar processing of pre-18S ribosomal RNA and ribosome assembly. The polypeptide is Small ribosomal subunit protein uS11A (rps1401) (Schizosaccharomyces pombe (strain 972 / ATCC 24843) (Fission yeast)).